We begin with the raw amino-acid sequence, 366 residues long: Histidinol-phosphate aminotransferase (366 aa).

Lys-226 carries the post-translational modification N6-(pyridoxal phosphate)lysine.

The protein belongs to the class-II pyridoxal-phosphate-dependent aminotransferase family. Histidinol-phosphate aminotransferase subfamily. It depends on pyridoxal 5'-phosphate as a cofactor.

It catalyses the reaction L-histidinol phosphate + 2-oxoglutarate = 3-(imidazol-4-yl)-2-oxopropyl phosphate + L-glutamate. Its pathway is amino-acid biosynthesis; L-histidine biosynthesis; L-histidine from 5-phospho-alpha-D-ribose 1-diphosphate: step 7/9. The sequence is that of Histidinol-phosphate aminotransferase from Methanosarcina barkeri (strain Fusaro / DSM 804).